The chain runs to 491 residues: Synaptotagmin-9 (491 aa).

Residues 1–52 are Vesicular-facing; sequence MPGARDALCHQALQLLAELCARGALEHDSCQDFIYHLRDRARPRLRDPDISV. Residues 9–31 are cysteine motif; sequence CHQALQLLAELCARGALEHDSCQ. The chain crosses the membrane as a helical span at residues 53-73; sequence SLLTLVVTACGLALFGVSLFV. The Cytoplasmic portion of the chain corresponds to 74–491; it reads SWKLCWVPWR…AHWHSLLEKR (418 aa). Over residues 91 to 104 the composition is skewed to polar residues; the sequence is SKDNNQEPLNYTDT. Residues 91 to 147 form a disordered region; it reads SKDNNQEPLNYTDTETNEQENSEDFLDPPTPCPDSSMKISHTSPDIPLSTQPGGQDN. Residues 105–116 show a composition bias toward acidic residues; sequence ETNEQENSEDFL. Over residues 127-144 the composition is skewed to polar residues; the sequence is MKISHTSPDIPLSTQPGG. The residue at position 177 (Ser177) is a Phosphoserine. C2 domains are found at residues 220 to 341 and 352 to 485; these read ACGK…ILWK and DLGE…AHWH. Residues Asp251, Asp257, Asp309, Phe310, Asp311, Ser314, Asp317, Asp383, Asp389, Asp443, and Asp445 each coordinate Ca(2+).

It belongs to the synaptotagmin family. In terms of assembly, homodimer; disulfide-linked via the cysteine motif. Can also form heterodimers with SYT3, SYT6, SYT7 and SYT10. The cofactor is Ca(2+).

It is found in the cytoplasmic vesicle. It localises to the secretory vesicle. The protein resides in the synaptic vesicle membrane. Its function is as follows. May be involved in Ca(2+)-dependent exocytosis of secretory vesicles through Ca(2+) and phospholipid binding to the C2 domain or may serve as Ca(2+) sensors in the process of vesicular trafficking and exocytosis. This is Synaptotagmin-9 (Syt9) from Rattus norvegicus (Rat).